Reading from the N-terminus, the 1011-residue chain is Beta-galactosidase A (1011 aa).

The N-terminal stretch at 1 to 19 (MKLLSSWVVAALAAQAAGA) is a signal peptide. Substrate-binding positions include Tyr96, 140–142 (NAE), and Asn199. The active-site Proton donor is Glu200. Cystine bridges form between Cys205–Cys206 and Cys267–Cys316. Glu299 acts as the Nucleophile in catalysis. Tyr365 contributes to the substrate binding site. N-linked (GlcNAc...) asparagine glycosylation is found at Asn374, Asn456, Asn625, Asn707, Asn763, Asn780, and Asn917.

This sequence belongs to the glycosyl hydrolase 35 family. As to quaternary structure, monomer.

It localises to the secreted. It carries out the reaction Hydrolysis of terminal non-reducing beta-D-galactose residues in beta-D-galactosides.. In terms of biological role, cleaves beta-linked terminal galactosyl residues from gangliosides, glycoproteins, and glycosaminoglycans. Has high in vitro transglycosylation activity with p-nitrophenyl-beta-D-galactopyranoside, methyl-beta-D-galactopyranoside or lactose as a donor and galactose as an acceptor. In Penicillium sp, this protein is Beta-galactosidase A (lacA).